The following is a 301-amino-acid chain: uncharacterized protein (301 aa).

Residues Ser44 and Tyr107 each act as charge relay system in the active site. The active-site Proton donor is Tyr133. The active-site Schiff-base intermediate with substrate is Lys162.

It belongs to the DapA family. In terms of assembly, homotetramer.

It is found in the cytoplasm. This is an uncharacterized protein from Pyrobaculum neutrophilum (strain DSM 2338 / JCM 9278 / NBRC 100436 / V24Sta) (Thermoproteus neutrophilus).